The chain runs to 266 residues: Amylovoran biosynthesis glycosyltransferase AmsE (266 aa).

Belongs to the glycosyltransferase 2 family.

It functions in the pathway glycan metabolism; exopolysaccharide biosynthesis. Involved in the biosynthesis of amylovoran which functions as a virulence factor. This Erwinia amylovora (Fire blight bacteria) protein is Amylovoran biosynthesis glycosyltransferase AmsE (amsE).